The following is a 452-amino-acid chain: Translation initiation factor eIF2B subunit gamma (452 aa).

At M1 the chain carries N-acetylmethionine. S260 bears the Phosphoserine mark.

This sequence belongs to the eIF-2B gamma/epsilon subunits family. As to quaternary structure, component of the translation initiation factor 2B (eIF2B) complex which is a heterodecamer of two sets of five different subunits: alpha, beta, gamma, delta and epsilon. Subunits alpha, beta and delta comprise a regulatory subcomplex and subunits epsilon and gamma comprise a catalytic subcomplex. Within the complex, the hexameric regulatory complex resides at the center, with the two heterodimeric catalytic subcomplexes bound on opposite sides.

The protein resides in the cytoplasm. The protein localises to the cytosol. With respect to regulation, activated by the chemical integrated stress response (ISR) inhibitor ISRIB which stimulates guanine nucleotide exchange factor activity for both phosphorylated and unphosphorylated eIF2. Its function is as follows. Acts as a component of the translation initiation factor 2B (eIF2B) complex, which catalyzes the exchange of GDP for GTP on the eukaryotic initiation factor 2 (eIF2) complex gamma subunit. Its guanine nucleotide exchange factor activity is repressed when bound to eIF2 complex phosphorylated on the alpha subunit, thereby limiting the amount of methionyl-initiator methionine tRNA available to the ribosome and consequently global translation is repressed. The protein is Translation initiation factor eIF2B subunit gamma (EIF2B3) of Homo sapiens (Human).